A 417-amino-acid polypeptide reads, in one-letter code: Serine hydroxymethyltransferase (417 aa).

(6S)-5,6,7,8-tetrahydrofolate-binding positions include L122 and 126-128 (GHL). At K230 the chain carries N6-(pyridoxal phosphate)lysine. A (6S)-5,6,7,8-tetrahydrofolate-binding site is contributed by 355-357 (SPF).

This sequence belongs to the SHMT family. In terms of assembly, homodimer. It depends on pyridoxal 5'-phosphate as a cofactor.

It is found in the cytoplasm. The catalysed reaction is (6R)-5,10-methylene-5,6,7,8-tetrahydrofolate + glycine + H2O = (6S)-5,6,7,8-tetrahydrofolate + L-serine. Its pathway is one-carbon metabolism; tetrahydrofolate interconversion. It participates in amino-acid biosynthesis; glycine biosynthesis; glycine from L-serine: step 1/1. Functionally, catalyzes the reversible interconversion of serine and glycine with tetrahydrofolate (THF) serving as the one-carbon carrier. This reaction serves as the major source of one-carbon groups required for the biosynthesis of purines, thymidylate, methionine, and other important biomolecules. Also exhibits THF-independent aldolase activity toward beta-hydroxyamino acids, producing glycine and aldehydes, via a retro-aldol mechanism. This is Serine hydroxymethyltransferase from Francisella tularensis subsp. novicida (strain U112).